A 131-amino-acid polypeptide reads, in one-letter code: uncharacterized protein (131 aa).

2 helical membrane-spanning segments follow: residues 52–72 and 97–117; these read LIMI…FYLV and SDII…YDVG.

It is found in the membrane. This is an uncharacterized protein from Acanthamoeba polyphaga mimivirus (APMV).